Here is a 303-residue protein sequence, read N- to C-terminus: UDP-N-acetylenolpyruvoylglucosamine reductase (303 aa).

Residues 28–195 (KTGGPAQYLA…ISATFGLEPG (168 aa)) enclose the FAD-binding PCMH-type domain. Residue R174 is part of the active site. S224 (proton donor) is an active-site residue. E294 is a catalytic residue.

Belongs to the MurB family. It depends on FAD as a cofactor.

Its subcellular location is the cytoplasm. The catalysed reaction is UDP-N-acetyl-alpha-D-muramate + NADP(+) = UDP-N-acetyl-3-O-(1-carboxyvinyl)-alpha-D-glucosamine + NADPH + H(+). Its pathway is cell wall biogenesis; peptidoglycan biosynthesis. Functionally, cell wall formation. The sequence is that of UDP-N-acetylenolpyruvoylglucosamine reductase from Lactobacillus gasseri (strain ATCC 33323 / DSM 20243 / BCRC 14619 / CIP 102991 / JCM 1131 / KCTC 3163 / NCIMB 11718 / NCTC 13722 / AM63).